The chain runs to 235 residues: Secretory carrier-associated membrane protein 5B (235 aa).

Residues 1–39 (MSDKPNNFPPLPRFIPLKPCFYQDFDTDIPDVHRTTAKR) lie on the Cytoplasmic side of the membrane. A helical membrane pass occupies residues 40–60 (LYYLWMLNSITLGVNLIGCLA). Residues 61-67 (WLIGGGG) lie on the Extracellular side of the membrane. A helical membrane pass occupies residues 68–88 (ATNFGLAFLWLILFTPCSYVC). Residues 89 to 102 (WFRPIYKAFKTDSS) lie on the Cytoplasmic side of the membrane. Residues 103-125 (FNFMAFFFTFTGQLVISIIQAVG) traverse the membrane as a helical segment. Topologically, residues 126-148 (IPGWGVCGWIASISFFGTNVGSA) are extracellular. Residues 149-169 (VVMLIPTIMFTAVAVLSFVAL) traverse the membrane as a helical segment. The Cytoplasmic segment spans residues 170–235 (TKVHRFYRGA…TPNYGYSNQM (66 aa)).

Belongs to the SCAMP family. SCAMP5 subfamily.

It localises to the cell membrane. It is found in the golgi apparatus membrane. The protein resides in the golgi apparatus. The protein localises to the trans-Golgi network membrane. Its subcellular location is the recycling endosome membrane. It localises to the cytoplasmic vesicle. It is found in the secretory vesicle. The protein resides in the synaptic vesicle membrane. Required for the calcium-dependent exocytosis of signal sequence-containing cytokines. Probably acts in cooperation with the SNARE machinery. The chain is Secretory carrier-associated membrane protein 5B (scamp5-b) from Xenopus laevis (African clawed frog).